The primary structure comprises 556 residues: Beta-caryophyllene synthase TPS9FN (556 aa).

Arg-273, Asp-310, Asp-314, Arg-451, and Asp-454 together coordinate (2E,6E)-farnesyl diphosphate. 2 residues coordinate Mg(2+): Asp-310 and Asp-314. The DDXXD motif motif lies at 310-314 (DDIYD). The Mg(2+) site is built by Asp-454, Ser-458, and Glu-462.

Belongs to the terpene synthase family. Tpsb subfamily. Requires Mg(2+) as cofactor. It depends on Mn(2+) as a cofactor. Expressed in glandular trichomes two to four weeks after flowering onset.

It catalyses the reaction (2E,6E)-farnesyl diphosphate = (-)-(E)-beta-caryophyllene + diphosphate. The catalysed reaction is (2E,6E)-farnesyl diphosphate = alpha-humulene + diphosphate. It participates in secondary metabolite biosynthesis; terpenoid biosynthesis. In terms of biological role, involved in sesquiterpene olefins biosynthesis, constituants of cannabinoids and terpenoids-rich resins. Catalyzes mainly the conversion of (2E)-farnesyl diphosphate to beta-caryophyllene and alpha-humulene. Can also use (2E)-geranyl diphosphate as substrate with low efficiency. The chain is Beta-caryophyllene synthase TPS9FN from Cannabis sativa (Hemp).